The sequence spans 305 residues: tRNA dimethylallyltransferase (305 aa).

8–15 (GPTAVGKT) contacts ATP. 10 to 15 (TAVGKT) is a substrate binding site. The interaction with substrate tRNA stretch occupies residues 33–36 (DSRQ).

Belongs to the IPP transferase family. Monomer. The cofactor is Mg(2+).

It catalyses the reaction adenosine(37) in tRNA + dimethylallyl diphosphate = N(6)-dimethylallyladenosine(37) in tRNA + diphosphate. Catalyzes the transfer of a dimethylallyl group onto the adenine at position 37 in tRNAs that read codons beginning with uridine, leading to the formation of N6-(dimethylallyl)adenosine (i(6)A). The polypeptide is tRNA dimethylallyltransferase (Thermotoga sp. (strain RQ2)).